The chain runs to 146 residues: uncharacterized protein (146 aa).

The signal sequence occupies residues 1-26 (MQFRPSIALVLSIVGILSLEISWTDG).

As to expression, prismatic layer of shell (at protein level). Expressed primarily in the mantle with highest level in the mantle edge and lower level in the mantle pallium.

The protein localises to the secreted. This is an uncharacterized protein from Margaritifera margaritifera (Freshwater pearl mussel).